The sequence spans 385 residues: S-adenosylmethionine synthase (385 aa).

Residue histidine 16 participates in ATP binding. Residue aspartate 18 participates in Mg(2+) binding. Glutamate 44 serves as a coordination point for K(+). Residues glutamate 57 and glutamine 100 each coordinate L-methionine. The tract at residues 100–110 is flexible loop; that stretch reads QSPDINQGVDR. ATP-binding positions include 164 to 166, 230 to 231, aspartate 239, 245 to 246, alanine 262, and lysine 266; these read DGK, KF, and RK. Aspartate 239 is a binding site for L-methionine. Lysine 270 is an L-methionine binding site.

Belongs to the AdoMet synthase family. In terms of assembly, homotetramer; dimer of dimers. The cofactor is Mg(2+). Requires K(+) as cofactor.

Its subcellular location is the cytoplasm. The enzyme catalyses L-methionine + ATP + H2O = S-adenosyl-L-methionine + phosphate + diphosphate. It participates in amino-acid biosynthesis; S-adenosyl-L-methionine biosynthesis; S-adenosyl-L-methionine from L-methionine: step 1/1. In terms of biological role, catalyzes the formation of S-adenosylmethionine (AdoMet) from methionine and ATP. The overall synthetic reaction is composed of two sequential steps, AdoMet formation and the subsequent tripolyphosphate hydrolysis which occurs prior to release of AdoMet from the enzyme. The chain is S-adenosylmethionine synthase from Helicobacter pylori (strain ATCC 700392 / 26695) (Campylobacter pylori).